The following is a 54-amino-acid chain: SPbeta prophage-derived uncharacterized protein YoqE (54 aa).

The chain is SPbeta prophage-derived uncharacterized protein YoqE (yoqE) from Bacillus subtilis (strain 168).